The following is a 224-amino-acid chain: Phosphoribosylformylglycinamidine synthase subunit PurQ (224 aa).

The region spanning 2–224 is the Glutamine amidotransferase type-1 domain; it reads TVAVVRFGGS…DGQGILGAFA (223 aa). Catalysis depends on Cys85, which acts as the Nucleophile. Residues His202 and Glu204 contribute to the active site.

In terms of assembly, part of the FGAM synthase complex composed of 1 PurL, 1 PurQ and 2 PurS subunits.

It localises to the cytoplasm. It carries out the reaction N(2)-formyl-N(1)-(5-phospho-beta-D-ribosyl)glycinamide + L-glutamine + ATP + H2O = 2-formamido-N(1)-(5-O-phospho-beta-D-ribosyl)acetamidine + L-glutamate + ADP + phosphate + H(+). The enzyme catalyses L-glutamine + H2O = L-glutamate + NH4(+). The protein operates within purine metabolism; IMP biosynthesis via de novo pathway; 5-amino-1-(5-phospho-D-ribosyl)imidazole from N(2)-formyl-N(1)-(5-phospho-D-ribosyl)glycinamide: step 1/2. Part of the phosphoribosylformylglycinamidine synthase complex involved in the purines biosynthetic pathway. Catalyzes the ATP-dependent conversion of formylglycinamide ribonucleotide (FGAR) and glutamine to yield formylglycinamidine ribonucleotide (FGAM) and glutamate. The FGAM synthase complex is composed of three subunits. PurQ produces an ammonia molecule by converting glutamine to glutamate. PurL transfers the ammonia molecule to FGAR to form FGAM in an ATP-dependent manner. PurS interacts with PurQ and PurL and is thought to assist in the transfer of the ammonia molecule from PurQ to PurL. This is Phosphoribosylformylglycinamidine synthase subunit PurQ from Halobacterium salinarum (strain ATCC 700922 / JCM 11081 / NRC-1) (Halobacterium halobium).